Reading from the N-terminus, the 182-residue chain is ATP-dependent protease subunit HslV (182 aa).

T10 is a catalytic residue. Positions 166, 169, and 172 each coordinate Na(+).

The protein belongs to the peptidase T1B family. HslV subfamily. As to quaternary structure, a double ring-shaped homohexamer of HslV is capped on each side by a ring-shaped HslU homohexamer. The assembly of the HslU/HslV complex is dependent on binding of ATP.

It is found in the cytoplasm. The enzyme catalyses ATP-dependent cleavage of peptide bonds with broad specificity.. Its activity is regulated as follows. Allosterically activated by HslU binding. Functionally, protease subunit of a proteasome-like degradation complex believed to be a general protein degrading machinery. The polypeptide is ATP-dependent protease subunit HslV (Rickettsia prowazekii (strain Madrid E)).